Consider the following 74-residue polypeptide: UPF0154 protein OB1676 (74 aa).

The helical transmembrane segment at 4-24 (IWVVLIAIAALVAGVALGFFI) threads the bilayer.

It belongs to the UPF0154 family.

The protein localises to the membrane. In Oceanobacillus iheyensis (strain DSM 14371 / CIP 107618 / JCM 11309 / KCTC 3954 / HTE831), this protein is UPF0154 protein OB1676.